Reading from the N-terminus, the 225-residue chain is Ribosomal RNA large subunit methyltransferase E (225 aa).

S-adenosyl-L-methionine contacts are provided by Gly-79, Trp-81, Asp-97, Asp-113, and Asp-137. Residue Lys-177 is the Proton acceptor of the active site.

It belongs to the class I-like SAM-binding methyltransferase superfamily. RNA methyltransferase RlmE family.

It is found in the cytoplasm. It catalyses the reaction uridine(2552) in 23S rRNA + S-adenosyl-L-methionine = 2'-O-methyluridine(2552) in 23S rRNA + S-adenosyl-L-homocysteine + H(+). Specifically methylates the uridine in position 2552 of 23S rRNA at the 2'-O position of the ribose in the fully assembled 50S ribosomal subunit. This is Ribosomal RNA large subunit methyltransferase E from Acidiphilium cryptum (strain JF-5).